Consider the following 202-residue polypeptide: Small ribosomal subunit protein uS4 (202 aa).

A disordered region spans residues 18-42 (LPGLTRKAAKRSYPPGQHGQARRKR). An S4 RNA-binding domain is found at 90–152 (NRLDNVCFRL…KPSKKLAETN (63 aa)).

This sequence belongs to the universal ribosomal protein uS4 family. Part of the 30S ribosomal subunit. Contacts protein S5. The interaction surface between S4 and S5 is involved in control of translational fidelity.

Functionally, one of the primary rRNA binding proteins, it binds directly to 16S rRNA where it nucleates assembly of the body of the 30S subunit. With S5 and S12 plays an important role in translational accuracy. The chain is Small ribosomal subunit protein uS4 from Synechococcus sp. (strain RCC307).